Reading from the N-terminus, the 361-residue chain is D-alanine--D-alanine ligase (361 aa).

An ATP-grasp domain is found at 134–344; it reads KLLLKSFDIP…FKDLVDNLID (211 aa). 167–222 lines the ATP pocket; the sequence is KEVLGYPVIVKPAVLGSSIGINVAYSENQIESFIKEALKYDLTIVIEKFIEAREIE. Mg(2+) is bound by residues aspartate 297, glutamate 311, and asparagine 313.

This sequence belongs to the D-alanine--D-alanine ligase family. Mg(2+) is required as a cofactor. The cofactor is Mn(2+).

The protein resides in the cytoplasm. The catalysed reaction is 2 D-alanine + ATP = D-alanyl-D-alanine + ADP + phosphate + H(+). The protein operates within cell wall biogenesis; peptidoglycan biosynthesis. In terms of biological role, cell wall formation. The chain is D-alanine--D-alanine ligase from Borreliella burgdorferi (strain ZS7) (Borrelia burgdorferi).